Here is a 121-residue protein sequence, read N- to C-terminus: uncharacterized protein (121 aa).

Residues 100 to 121 (KSFSNTKDGKKNDDDNNSSSKS) form a disordered region.

This is an uncharacterized protein from Mycoplasma pneumoniae (strain ATCC 29342 / M129 / Subtype 1) (Mycoplasmoides pneumoniae).